Here is a 793-residue protein sequence, read N- to C-terminus: ABC transporter G family member 1 (793 aa).

A compositionally biased stretch (low complexity) spans 1–20; that stretch reads MDSNNNNNNENEAFSGASES. The tract at residues 1–96 is disordered; that stretch reads MDSNNNNNNE…NNNQNNNIIN (96 aa). The span at 21–37 shows a compositional bias: basic and acidic residues; the sequence is SEFRKIVEENENEREFE. Positions 59-68 are enriched in polar residues; sequence ETINPNISLD. Residues 67–102 are a coiled coil; that stretch reads LDNNNNNNQNNQNNQNNNNNNNNQNNNIINNLNKKN. Positions 69–96 are enriched in low complexity; the sequence is NNNNNNQNNQNNQNNNNNNNNQNNNIIN. An ABC transporter domain is found at 123-364; the sequence is VQITEKGKKK…FNANGYHCSE (242 aa). Residue 156-163 participates in ATP binding; that stretch reads GPSGAGKT. Acidic residues predominate over residues 382–398; sequence DQADSDDDDYNDEEEEI. The segment at 382 to 457 is disordered; the sequence is DQADSDDDDY…QSTDGRARRR (76 aa). A compositionally biased stretch (gly residues) spans 399–413; it reads GGGGGGSGGGAGGIE. Polar residues predominate over residues 421–437; it reads PTMNGSAVDNIKNNELK. Residues 438–448 show a composition bias toward low complexity; that stretch reads QQQQQQQQQQQ. One can recognise an ABC transmembrane type-2 domain in the interval 527–785; sequence MAFKVNLIQA…VLTFLVLKLK (259 aa). Transmembrane regions (helical) follow at residues 533-553, 563-583, 610-630, 647-667, 674-694, 701-721, and 764-784; these read LIQA…LGLG, VVAF…IHVF, FMDA…VYWM, FVLM…LISS, VGTA…GFFI, GWLV…AAVI, and VWIL…VLKL.

Belongs to the ABC transporter superfamily. ABCG family.

Its subcellular location is the membrane. This is ABC transporter G family member 1 (abcG1) from Dictyostelium discoideum (Social amoeba).